The chain runs to 138 residues: Transcription antitermination protein NusB (138 aa).

This sequence belongs to the NusB family.

In terms of biological role, involved in transcription antitermination. Required for transcription of ribosomal RNA (rRNA) genes. Binds specifically to the boxA antiterminator sequence of the ribosomal RNA (rrn) operons. The sequence is that of Transcription antitermination protein NusB from Helicobacter pylori (strain Shi470).